Reading from the N-terminus, the 194-residue chain is Peptidyl-tRNA hydrolase (194 aa).

TRNA is bound at residue Tyr17. His22 functions as the Proton acceptor in the catalytic mechanism. Positions 68, 70, and 116 each coordinate tRNA.

It belongs to the PTH family. Monomer.

The protein localises to the cytoplasm. The enzyme catalyses an N-acyl-L-alpha-aminoacyl-tRNA + H2O = an N-acyl-L-amino acid + a tRNA + H(+). Functionally, hydrolyzes ribosome-free peptidyl-tRNAs (with 1 or more amino acids incorporated), which drop off the ribosome during protein synthesis, or as a result of ribosome stalling. Catalyzes the release of premature peptidyl moieties from peptidyl-tRNA molecules trapped in stalled 50S ribosomal subunits, and thus maintains levels of free tRNAs and 50S ribosomes. This is Peptidyl-tRNA hydrolase from Shewanella sediminis (strain HAW-EB3).